Here is a 229-residue protein sequence, read N- to C-terminus: MASSNFFLLTALIALVATQAMASDPSPLQDFCVADRNSPVHVNGFPCKDAKDVNVDDFFLAANLDKPMDTTKSKAGSNVTLINVMKLAGLNTLGISMARIDYAPKGQNPPHTHPRATEILTVLEGTLYVGFVTSNQANGENKLFTKTLNKGDVFVFPQGLIHFQFNPSYDKPAVAIAALSSQNPGAITIANAVFGSNSPISDDVLAKAFQVDKKAVDWLQAQFWENNHN.

Residues M1–A22 form the signal peptide. An intrachain disulfide couples C32 to C47. A Cupin type-1 domain is found at A62–D217. N-linked (GlcNAc...) asparagine glycosylation occurs at N78. Mn(2+)-binding residues include H111, H113, E118, and H162.

The protein belongs to the germin family. Oligomer (believed to be a pentamer but probably hexamer).

It is found in the secreted. It localises to the extracellular space. The protein resides in the apoplast. In terms of biological role, may play a role in plant defense. Probably has no oxalate oxidase activity even if the active site is conserved. This chain is Germin-like protein 12-2, found in Oryza sativa subsp. japonica (Rice).